A 373-amino-acid polypeptide reads, in one-letter code: tRNA pseudouridine synthase Pus10 (373 aa).

Aspartate 197 acts as the Nucleophile in catalysis. Residues tyrosine 265 and tyrosine 336 each coordinate substrate.

Belongs to the pseudouridine synthase Pus10 family.

The catalysed reaction is uridine(54) in tRNA = pseudouridine(54) in tRNA. It carries out the reaction uridine(55) in tRNA = pseudouridine(55) in tRNA. In terms of biological role, responsible for synthesis of pseudouridine from uracil-54 and uracil-55 in the psi GC loop of transfer RNAs. In Korarchaeum cryptofilum (strain OPF8), this protein is tRNA pseudouridine synthase Pus10.